Here is a 957-residue protein sequence, read N- to C-terminus: Glycine dehydrogenase (decarboxylating) (957 aa).

At Lys-708 the chain carries N6-(pyridoxal phosphate)lysine.

Belongs to the GcvP family. In terms of assembly, the glycine cleavage system is composed of four proteins: P, T, L and H. Pyridoxal 5'-phosphate is required as a cofactor.

The enzyme catalyses N(6)-[(R)-lipoyl]-L-lysyl-[glycine-cleavage complex H protein] + glycine + H(+) = N(6)-[(R)-S(8)-aminomethyldihydrolipoyl]-L-lysyl-[glycine-cleavage complex H protein] + CO2. Its function is as follows. The glycine cleavage system catalyzes the degradation of glycine. The P protein binds the alpha-amino group of glycine through its pyridoxal phosphate cofactor; CO(2) is released and the remaining methylamine moiety is then transferred to the lipoamide cofactor of the H protein. The sequence is that of Glycine dehydrogenase (decarboxylating) from Salmonella typhi.